We begin with the raw amino-acid sequence, 185 residues long: Dual-action ribosomal maturation protein DarP (185 aa).

Belongs to the DarP family.

The protein resides in the cytoplasm. Member of a network of 50S ribosomal subunit biogenesis factors which assembles along the 30S-50S interface, preventing incorrect 23S rRNA structures from forming. Promotes peptidyl transferase center (PTC) maturation. In Vibrio vulnificus (strain YJ016), this protein is Dual-action ribosomal maturation protein DarP.